A 246-amino-acid polypeptide reads, in one-letter code: Carboxy-S-adenosyl-L-methionine synthase (246 aa).

S-adenosyl-L-methionine-binding positions include tyrosine 39, 64–66, 89–90, 117–118, asparagine 132, and arginine 199; these read GCS, DN, and DI.

Belongs to the class I-like SAM-binding methyltransferase superfamily. Cx-SAM synthase family. As to quaternary structure, homodimer.

It carries out the reaction prephenate + S-adenosyl-L-methionine = carboxy-S-adenosyl-L-methionine + 3-phenylpyruvate + H2O. Catalyzes the conversion of S-adenosyl-L-methionine (SAM) to carboxy-S-adenosyl-L-methionine (Cx-SAM). This Erwinia tasmaniensis (strain DSM 17950 / CFBP 7177 / CIP 109463 / NCPPB 4357 / Et1/99) protein is Carboxy-S-adenosyl-L-methionine synthase.